The following is a 391-amino-acid chain: Ferrochelatase (391 aa).

Fe cation contacts are provided by His-196 and Glu-281.

The protein belongs to the ferrochelatase family.

Its subcellular location is the cytoplasm. It catalyses the reaction heme b + 2 H(+) = protoporphyrin IX + Fe(2+). The protein operates within porphyrin-containing compound metabolism; protoheme biosynthesis; protoheme from protoporphyrin-IX: step 1/1. Catalyzes the ferrous insertion into protoporphyrin IX. This chain is Ferrochelatase, found in Prochlorococcus marinus (strain MIT 9211).